Here is a 446-residue protein sequence, read N- to C-terminus: Peroxisomal biogenesis factor 3 (446 aa).

At 1–12 (MARTGLQRHRGK) the chain is on the peroxisomal side. Residues 13 to 33 (LLGTGAVLGGLVVAGVVAAVA) form a helical membrane-spanning segment. Residues 34–446 (AKRWVRRQQQ…SASVYSNFGV (413 aa)) are Cytoplasmic-facing. The disordered stretch occupies residues 101 to 122 (RAGEDDEQGSGGHASAGEGSVS).

This sequence belongs to the peroxin-3 family.

It is found in the peroxisome membrane. Involved in peroxisome biosynthesis. In Eremothecium gossypii (strain ATCC 10895 / CBS 109.51 / FGSC 9923 / NRRL Y-1056) (Yeast), this protein is Peroxisomal biogenesis factor 3 (PEX3).